A 134-amino-acid polypeptide reads, in one-letter code: Acyl carrier protein, mitochondrial (134 aa).

Residues 1–46 (MFRTAALTAARVARPAVASAVRAGVARPAFVQAVPKVAAFQAVRFY) constitute a mitochondrion transit peptide. The Carrier domain occupies 55-131 (DEVFSRIAQV…KAVEYILSQP (77 aa)). The residue at position 91 (Ser-91) is an O-(pantetheine 4'-phosphoryl)serine.

Belongs to the acyl carrier protein (ACP) family. Complex I is composed of about 30 different subunits. Post-translationally, 4'-phosphopantetheine is transferred from CoA to a specific serine of apo-ACP by acpS. This modification is essential for activity because fatty acids are bound in thioester linkage to the sulfhydryl of the prosthetic group.

Its subcellular location is the mitochondrion. It participates in lipid metabolism; fatty acid biosynthesis. In terms of biological role, carrier of the growing fatty acid chain in fatty acid biosynthesis. May be involved in the synthesis of very-long-chain fatty acids. Accessory and non-catalytic subunit of the mitochondrial membrane respiratory chain NADH dehydrogenase (Complex I), which functions in the transfer of electrons from NADH to the respiratory chain. The polypeptide is Acyl carrier protein, mitochondrial (nuo-12) (Neurospora crassa (strain ATCC 24698 / 74-OR23-1A / CBS 708.71 / DSM 1257 / FGSC 987)).